Consider the following 885-residue polypeptide: Alanine--tRNA ligase (885 aa).

Zn(2+) is bound by residues His-563, His-567, Cys-677, and His-681. A disordered region spans residues 848–868; that stretch reads LGGKGGGGRPDRAQGGAPSLA.

The protein belongs to the class-II aminoacyl-tRNA synthetase family. Requires Zn(2+) as cofactor.

It is found in the cytoplasm. It catalyses the reaction tRNA(Ala) + L-alanine + ATP = L-alanyl-tRNA(Ala) + AMP + diphosphate. Catalyzes the attachment of alanine to tRNA(Ala) in a two-step reaction: alanine is first activated by ATP to form Ala-AMP and then transferred to the acceptor end of tRNA(Ala). Also edits incorrectly charged Ser-tRNA(Ala) and Gly-tRNA(Ala) via its editing domain. The chain is Alanine--tRNA ligase from Paracoccus denitrificans (strain Pd 1222).